A 481-amino-acid polypeptide reads, in one-letter code: Glutamine synthetase (481 aa).

One can recognise a GS beta-grasp domain in the interval 22 to 106; the sequence is NEVEFVDFRF…VFCDVYDVYK (85 aa). A GS catalytic domain is found at 114–481; the sequence is PRSIAKKALK…PFEFITTYSC (368 aa). Residues glutamate 139, glutamate 141, glutamate 223, and glutamate 230 each coordinate Mg(2+). Residues 274-275 and glycine 275 contribute to the L-glutamate site; that span reads NG. Mg(2+) is bound at residue histidine 279. ATP-binding positions include 281-283 and serine 283; that span reads HVS. The L-glutamate site is built by arginine 331, glutamate 337, and arginine 349. Residues arginine 349 and arginine 354 each coordinate ATP. Residue glutamate 367 participates in Mg(2+) binding. Arginine 369 serves as a coordination point for L-glutamate.

This sequence belongs to the glutamine synthetase family. As to quaternary structure, oligomer of 12 subunits arranged in the form of two hexameric ring. Mg(2+) is required as a cofactor.

The protein resides in the cytoplasm. It catalyses the reaction L-glutamate + NH4(+) + ATP = L-glutamine + ADP + phosphate + H(+). Its activity is regulated as follows. The activity of this enzyme could be controlled by adenylation under conditions of abundant glutamine. Its function is as follows. Catalyzes the ATP-dependent biosynthesis of glutamine from glutamate and ammonia. This chain is Glutamine synthetase, found in Helicobacter pylori (strain J99 / ATCC 700824) (Campylobacter pylori J99).